A 554-amino-acid chain; its full sequence is Outer envelope protein 61 (554 aa).

Residues 1 to 525 (MFNGLMDPEM…GMEKAKKAKK (525 aa)) are Cytoplasmic-facing. TPR repeat units lie at residues 103 to 136 (AQML…LKEI) and 180 to 213 (VKAL…SPED). 2 disordered regions span residues 245–269 (TEEN…AQGV) and 395–439 (APAS…PSAP). Basic and acidic residues predominate over residues 254-263 (ENKKPSKEAN). Residues 412-423 (SLGASGSSSGNS) show a composition bias toward low complexity. The helical transmembrane segment at 526–546 (WLFGKGGLIFAILMLVLAMVL) threads the bilayer. Topologically, residues 547-554 (HRLGYIGN) are lumenal.

Interacts (via TPR region) with HSP70-1, but not with HSP90-2. Interacts with ERDJ2A and ERDJ2B. In the ER membrane, associates with ERDJ2 in membrane complexes of 140 and 200 kDa and specifically interacts with the HSP70 and HSP90 chaperones via its TPR domain. Ubiquitous. Highest expression in leaves and lowest in roots.

It is found in the endoplasmic reticulum membrane. Its subcellular location is the plastid. It localises to the chloroplast outer membrane. Its function is as follows. Plays a role in protein import into the endoplasmic reticulum (ER). May function as chaperone docking protein during post-translational protein translocation into the ER. Chaperone receptor mediating Hsp70-dependent protein targeting to chloroplasts. Interacts specifically with some chloroplast precursors, but not with mitochondrial precursors. Able to select precursors for delivery to the chloroplast translocase independently of Hsp70. The polypeptide is Outer envelope protein 61 (OEP61) (Arabidopsis thaliana (Mouse-ear cress)).